The following is a 218-amino-acid chain: Capsid protein (218 aa).

An N-acetylmethionine; by host modification is found at Met1. Residues 1 to 10 show a composition bias toward low complexity; sequence MDKSESTSAG. The interval 1–29 is disordered; that stretch reads MDKSESTSAGRNRRRRLRRGSRSAPSSAD. Basic residues predominate over residues 11 to 21; that stretch reads RNRRRRLRRGS.

This sequence belongs to the cucumovirus capsid protein family.

It localises to the virion. Capsid protein. Probably binds RNA and plays a role in packaging. The polypeptide is Capsid protein (Cucumis sativus (Cucumber)).